We begin with the raw amino-acid sequence, 38 residues long: Photosystem II reaction center protein L (38 aa).

A helical transmembrane segment spans residues 17–37 (SLYWGLLLIFVLAVLFSNYFF).

This sequence belongs to the PsbL family. As to quaternary structure, PSII is composed of 1 copy each of membrane proteins PsbA, PsbB, PsbC, PsbD, PsbE, PsbF, PsbH, PsbI, PsbJ, PsbK, PsbL, PsbM, PsbT, PsbX, PsbY, PsbZ, Psb30/Ycf12, at least 3 peripheral proteins of the oxygen-evolving complex and a large number of cofactors. It forms dimeric complexes.

The protein resides in the plastid. It localises to the chloroplast thylakoid membrane. Its function is as follows. One of the components of the core complex of photosystem II (PSII). PSII is a light-driven water:plastoquinone oxidoreductase that uses light energy to abstract electrons from H(2)O, generating O(2) and a proton gradient subsequently used for ATP formation. It consists of a core antenna complex that captures photons, and an electron transfer chain that converts photonic excitation into a charge separation. This subunit is found at the monomer-monomer interface and is required for correct PSII assembly and/or dimerization. This is Photosystem II reaction center protein L from Angiopteris evecta (Mule's foot fern).